A 397-amino-acid polypeptide reads, in one-letter code: Succinyl-diaminopimelate desuccinylase (397 aa).

H73 contributes to the Zn(2+) binding site. D75 is an active-site residue. Position 106 (D106) interacts with Zn(2+). E140 (proton acceptor) is an active-site residue. Positions 141, 169, and 366 each coordinate Zn(2+).

It belongs to the peptidase M20A family. DapE subfamily. As to quaternary structure, homodimer. It depends on Zn(2+) as a cofactor. Co(2+) serves as cofactor.

The enzyme catalyses N-succinyl-(2S,6S)-2,6-diaminopimelate + H2O = (2S,6S)-2,6-diaminopimelate + succinate. It functions in the pathway amino-acid biosynthesis; L-lysine biosynthesis via DAP pathway; LL-2,6-diaminopimelate from (S)-tetrahydrodipicolinate (succinylase route): step 3/3. Functionally, catalyzes the hydrolysis of N-succinyl-L,L-diaminopimelic acid (SDAP), forming succinate and LL-2,6-diaminopimelate (DAP), an intermediate involved in the bacterial biosynthesis of lysine and meso-diaminopimelic acid, an essential component of bacterial cell walls. In Sinorhizobium medicae (strain WSM419) (Ensifer medicae), this protein is Succinyl-diaminopimelate desuccinylase.